The following is a 158-amino-acid chain: SsrA-binding protein (158 aa).

A disordered region spans residues 132 to 158 (KKTHDKRETEKKRDWNREKARLMRDKG). Residues 136 to 158 (DKRETEKKRDWNREKARLMRDKG) are compositionally biased toward basic and acidic residues.

Belongs to the SmpB family.

The protein localises to the cytoplasm. Required for rescue of stalled ribosomes mediated by trans-translation. Binds to transfer-messenger RNA (tmRNA), required for stable association of tmRNA with ribosomes. tmRNA and SmpB together mimic tRNA shape, replacing the anticodon stem-loop with SmpB. tmRNA is encoded by the ssrA gene; the 2 termini fold to resemble tRNA(Ala) and it encodes a 'tag peptide', a short internal open reading frame. During trans-translation Ala-aminoacylated tmRNA acts like a tRNA, entering the A-site of stalled ribosomes, displacing the stalled mRNA. The ribosome then switches to translate the ORF on the tmRNA; the nascent peptide is terminated with the 'tag peptide' encoded by the tmRNA and targeted for degradation. The ribosome is freed to recommence translation, which seems to be the essential function of trans-translation. This chain is SsrA-binding protein, found in Brucella anthropi (strain ATCC 49188 / DSM 6882 / CCUG 24695 / JCM 21032 / LMG 3331 / NBRC 15819 / NCTC 12168 / Alc 37) (Ochrobactrum anthropi).